Consider the following 728-residue polypeptide: Catalase-peroxidase (728 aa).

An N-terminal signal peptide occupies residues Met-1 to Gly-16. The interval Met-1–Asp-26 is disordered. The segment at residues Trp-96–Tyr-218 is a cross-link (tryptophyl-tyrosyl-methioninium (Trp-Tyr) (with M-244)). His-97 acts as the Proton acceptor in catalysis. The tryptophyl-tyrosyl-methioninium (Tyr-Met) (with W-96) cross-link spans Tyr-218 to Met-244. Residue His-259 coordinates heme b.

Belongs to the peroxidase family. Peroxidase/catalase subfamily. In terms of assembly, homodimer or homotetramer. Heme b serves as cofactor. Post-translationally, formation of the three residue Trp-Tyr-Met cross-link is important for the catalase, but not the peroxidase activity of the enzyme.

The catalysed reaction is H2O2 + AH2 = A + 2 H2O. The enzyme catalyses 2 H2O2 = O2 + 2 H2O. In terms of biological role, bifunctional enzyme with both catalase and broad-spectrum peroxidase activity. The chain is Catalase-peroxidase from Rhizobium leguminosarum bv. phaseoli.